A 319-amino-acid chain; its full sequence is Homoserine dehydrogenase (319 aa).

NADPH is bound by residues Phe10, Thr12, Val13, Arg40, Lys57, Ser92, Ser93, Ser114, and Lys116. Val13 is an NAD(+) binding site. NADP(+) is bound by residues Val13 and Arg40. Residue Ser92 participates in NAD(+) binding. Ser92 serves as a coordination point for NADP(+). 2 residues coordinate NADP(+): Ser114 and Lys116. Na(+)-binding residues include Glu140, Val143, Ala145, and Thr147. Residues Gly197 and Glu200 each contribute to the NADP(+) site. Residues Glu200 and Asp211 each coordinate L-homoserine. Catalysis depends on Lys215, which acts as the Proton donor. Residue Gly296 coordinates NADPH. Gly296 serves as a coordination point for NAD(+). Residue Gly296 coordinates NADP(+).

Belongs to the homoserine dehydrogenase family. As to quaternary structure, homodimer. A metal cation serves as cofactor.

It carries out the reaction L-homoserine + NAD(+) = L-aspartate 4-semialdehyde + NADH + H(+). It participates in amino-acid biosynthesis; L-methionine biosynthesis via de novo pathway; L-homoserine from L-aspartate: step 3/3. The protein operates within amino-acid biosynthesis; L-threonine biosynthesis; L-threonine from L-aspartate: step 3/5. Functionally, catalyzes the conversion of L-aspartate-beta-semialdehyde (L-Asa) to L-homoserine (L-Hse), the third step in the biosynthesis of threonine and methionine from aspartate. Utilizes NADH but not NADPH as coenzyme. The chain is Homoserine dehydrogenase from Pyrococcus horikoshii (strain ATCC 700860 / DSM 12428 / JCM 9974 / NBRC 100139 / OT-3).